We begin with the raw amino-acid sequence, 122 residues long: EPIDERMAL PATTERNING FACTOR-like protein 1 (122 aa).

Residues 1-26 (MFAIYKSTLLLLPLILILLITPQVSS) form the signal peptide. 3 cysteine pairs are disulfide-bonded: Cys55–Cys113, Cys59–Cys65, and Cys62–Cys115.

The protein belongs to the plant cysteine rich small secretory peptide family. Epidermal patterning factor subfamily.

Its subcellular location is the secreted. Controls stomatal patterning. The protein is EPIDERMAL PATTERNING FACTOR-like protein 1 of Arabidopsis thaliana (Mouse-ear cress).